Here is an 83-residue protein sequence, read N- to C-terminus: MKTLLLTLVVLTIVCLDLGHTRICLNQQSSEPQTTETCPNGEDTCYNKTWNTHRGSRTDRGCGCPKVKPGINLRCCKTDKCNQ.

Positions 1 to 21 are cleaved as a signal peptide; sequence MKTLLLTLVVLTIVCLDLGHT. Disulfide bonds link C24–C45, C38–C62, C64–C75, and C76–C81.

This sequence belongs to the three-finger toxin family. Short-chain subfamily. Type I alpha-neurotoxin sub-subfamily. As to expression, expressed by the venom gland.

The protein localises to the secreted. Functionally, binds to muscle nicotinic acetylcholine receptor (nAChR) and inhibit acetylcholine from binding to the receptor, thereby impairing neuromuscular transmission. The sequence is that of Neurotoxin 3FTx-RI from Bungarus fasciatus (Banded krait).